The primary structure comprises 445 residues: rRNA methyltransferase 3B, mitochondrial (445 aa).

Residues 1 to 37 (MATRIASMRFRCALFQSALTLGRNEVNIKRYVRRRRA) constitute a mitochondrion transit peptide. 2 disordered regions span residues 52 to 90 (EGVI…SQPV) and 311 to 334 (HSTT…SDYG). Composition is skewed to polar residues over residues 54-70 (VISQ…NDIT), 78-90 (IENP…SQPV), and 311-324 (HSTT…NTTP). S-adenosyl-L-methionine is bound by residues Gly387, Ile411, and Leu420.

The protein belongs to the class IV-like SAM-binding methyltransferase superfamily. RNA methyltransferase TrmH family.

The protein localises to the mitochondrion. It carries out the reaction a uridine in rRNA + S-adenosyl-L-methionine = a 2'-O-methyluridine in rRNA + S-adenosyl-L-homocysteine + H(+). S-adenosyl-L-methionine-dependent 2'-O-ribose methyltransferase that catalyzes the formation of 2'-O-methylguanosine at position 1485 (Gm1485) in the mitochondrial large subunit ribosomal RNA (mtLSU rRNA), a conserved modification in the peptidyl transferase domain of the mtLSU rRNA. Also required for formation of 2'-O-methyluridine at position 1484 (Um1484) mediated by MRM2. The protein is rRNA methyltransferase 3B, mitochondrial of Danio rerio (Zebrafish).